A 422-amino-acid polypeptide reads, in one-letter code: Protein phosphatase methylesterase 1 (422 aa).

The tract at residues 1–27 is disordered; it reads MSDMFRKSVLNKLPHLPPTRAPWADES. Residues serine 207, aspartate 234, and histidine 371 contribute to the active site.

The protein belongs to the AB hydrolase superfamily.

It catalyses the reaction [phosphatase 2A protein]-C-terminal L-leucine methyl ester + H2O = [phosphatase 2A protein]-C-terminal L-leucine + methanol + H(+). In terms of biological role, demethylates proteins that have been reversibly carboxymethylated. Demethylates the phosphatase PP2A catalytic subunit. The polypeptide is Protein phosphatase methylesterase 1 (PPE1) (Cryptococcus neoformans var. neoformans serotype D (strain B-3501A) (Filobasidiella neoformans)).